The primary structure comprises 407 residues: Aurofusarin biosynthesis cluster protein S (407 aa).

Residues M1–T35 form the signal peptide. Residues N52, N174, N196, N274, and N312 are each glycosylated (N-linked (GlcNAc...) asparagine). 2 FAS1 domains span residues N52–L192 and P195–L365.

As to quaternary structure, might be part of an extracellular enzyme complex composed of GIP1, aurF, aurO and aurS.

It localises to the secreted. It is found in the extracellular space. Its pathway is pigment biosynthesis. Its function is as follows. Part of the gene cluster that mediates the biosynthesis of aurofusarin, a red mycelium pigment which is acting as a mycotoxin. The first step is performed by the polyketide synthase which condenses one acetyl-CoA and 6 malonyl-CoA units to form the first intermediate, the cyclic heptaketide and yellow pigment YWA1. The C2 hydroxyl group in the pyrone ring of YWA1 is probably formed during ring closure by an aldol-type cyclization reaction. The dehydratase aurZ then acts as the first tailoring enzyme in the aurofusarin biosynthetic pathway by converting YWA1 to nor-rubrofusarin. Nor-rubrofusarin is then methylated to rubrofusarin by the O-methyltransferase aurJ. Rubrofusarin is then transported across the plasma membrane by the rubrofusarin-specific pump aurT for further enzymatic processing by the extracellular complex composed of GIP1, aurF, aurO and aurS to yield aurofusarin. This Gibberella zeae (strain ATCC MYA-4620 / CBS 123657 / FGSC 9075 / NRRL 31084 / PH-1) (Wheat head blight fungus) protein is Aurofusarin biosynthesis cluster protein S.